The chain runs to 384 residues: Cell division protein FtsZ (384 aa).

Residues 20-24, 107-109, Glu138, Arg142, and Asn186 each bind GTP; these read GGGGN and GTG.

Belongs to the FtsZ family. Homodimer. Polymerizes to form a dynamic ring structure in a strictly GTP-dependent manner. Interacts directly with several other division proteins.

It is found in the cytoplasm. Its function is as follows. Essential cell division protein that forms a contractile ring structure (Z ring) at the future cell division site. The regulation of the ring assembly controls the timing and the location of cell division. One of the functions of the FtsZ ring is to recruit other cell division proteins to the septum to produce a new cell wall between the dividing cells. Binds GTP and shows GTPase activity. The sequence is that of Cell division protein FtsZ from Wigglesworthia glossinidia brevipalpis.